A 618-amino-acid chain; its full sequence is MILQNKTFDLNPNDIAGLELVCQTLRNRILEVVSANGGHLSSSLGAVELIVGMHALFDCQKNPFIFDTSHQAYAHKLLTGRFESFSTLRQFKGLSGFTKPSESAYDYFIAGHSSTSVSIGVGVAKAFCLKQALGMPIALLGDGSISAGIFYEALNELGDRKYPMIMILNDNEMSISTPIGALSKALSQLMKGPFYQSFRSKVKKILSTLPESVNYLASRFEESFKLITPGVFFEELGINYIGPINGHDLSAIIETLKLAKELKEPVLIHAQTLKGKGYKIAEGRYEKWHGVGPFDLDTGLSKKSKSAILSPTEAYSNTLLELAKKDEKIVGVTAAMPSGTGLDKLIDAYPLRFFDVAIAEQHALTSSSAMAKEGFKPFVSIYSTFLQRAYDSIVHDACISSLPIKLAIDRAGIVGEDGETHQGLLDVSYLRSIPNMVIFAPRDNETLKNAVRFANEHDSSPCAFRYPRGSFALKEGVFEPSGFVLGQSELLKKEGEILLIGYGNGVGRAHLVQLALKEKNIECALLDLRFLKPLDPNLSAIVAPYQKLYVFSDNYKLGGVASAILEFLSEQNILKPVKSFEIIDEFIMHGNTALVEKSLGLDTESLTDAILKDLGQER.

Thiamine diphosphate is bound by residues His-70 and 111–113 (GHS). Asp-142 is a binding site for Mg(2+). Thiamine diphosphate is bound by residues 143–144 (GS), Asn-171, Tyr-278, and Glu-360. Mg(2+) is bound at residue Asn-171.

Belongs to the transketolase family. DXPS subfamily. As to quaternary structure, homodimer. Mg(2+) is required as a cofactor. It depends on thiamine diphosphate as a cofactor.

It catalyses the reaction D-glyceraldehyde 3-phosphate + pyruvate + H(+) = 1-deoxy-D-xylulose 5-phosphate + CO2. Its pathway is metabolic intermediate biosynthesis; 1-deoxy-D-xylulose 5-phosphate biosynthesis; 1-deoxy-D-xylulose 5-phosphate from D-glyceraldehyde 3-phosphate and pyruvate: step 1/1. Its function is as follows. Catalyzes the acyloin condensation reaction between C atoms 2 and 3 of pyruvate and glyceraldehyde 3-phosphate to yield 1-deoxy-D-xylulose-5-phosphate (DXP). The polypeptide is 1-deoxy-D-xylulose-5-phosphate synthase (Helicobacter pylori (strain ATCC 700392 / 26695) (Campylobacter pylori)).